A 99-amino-acid polypeptide reads, in one-letter code: Defensin-A4 (99 aa).

Residues 1–21 (MKTLCLLFAVLCLVTWTQARG) form the signal peptide. Residues 22 to 68 (AEVEENLTAQDGEVDIAGDNGDVQLTLNTDDFESFTLKTLTLGHPRV) constitute a propeptide that is removed on maturation. 3 disulfide bridges follow: Cys73/Cys97, Cys75/Cys89, and Cys79/Cys96.

The protein belongs to the alpha-defensin family. In terms of tissue distribution, lowly expressed in spleen, and expressed at lower levels in kidney and lung.

It is found in the secreted. Functionally, has antimicrobial activity. The polypeptide is Defensin-A4 (Ornithorhynchus anatinus (Duckbill platypus)).